A 291-amino-acid polypeptide reads, in one-letter code: Probable peptide ABC transporter permease protein y4tQ (291 aa).

A run of 5 helical transmembrane segments spans residues 28–48 (LVLLGGGILLLLILLALAAPL), 92–112 (LIVGLLSAVCAAVCGLLIGVI), 137–157 (LLAIALLSLTGPGIGILIVAI), 213–233 (ATVCASAIMTEAGLSFIGVGV), and 249–269 (LFLAIAPLTIFAPGLCLAVTV). Residues 88–276 (ARISLIVGLL…VTVLAVNLLG (189 aa)) form the ABC transmembrane type-1 domain.

The protein belongs to the binding-protein-dependent transport system permease family. OppBC subfamily.

The protein resides in the cell inner membrane. Functionally, probably part of the binding-protein-dependent transport system y4tOPQRS for a peptide. Probably responsible for the translocation of the substrate across the membrane. This Sinorhizobium fredii (strain NBRC 101917 / NGR234) protein is Probable peptide ABC transporter permease protein y4tQ.